Here is a 338-residue protein sequence, read N- to C-terminus: Protein SPATA31F3 (338 aa).

A helical transmembrane segment spans residues 7 to 29; the sequence is VLWDVGYPLYTYGSICIIALIIW. S152 is subject to Phosphoserine. The span at 290-306 shows a compositional bias: basic and acidic residues; the sequence is DRTKNIEKSPTVTKDHV. The segment at 290–338 is disordered; sequence DRTKNIEKSPTVTKDHVWGATTQKTTEDPEAQPPSTEEEGLIFCDAPSA.

The protein belongs to the SPATA31 family.

The protein resides in the membrane. The protein is Protein SPATA31F3 of Homo sapiens (Human).